Here is a 1046-residue protein sequence, read N- to C-terminus: SWI/SNF-related matrix-associated actin-dependent regulator of chromatin subfamily A member 1 (1046 aa).

The interval 27-61 (EQPGPSTFKEEGAAAAATEGTTATEKGEKKEKITS) is disordered. A compositionally biased stretch (low complexity) spans 39–50 (AAAAATEGTTAT). Residues S120 and S123 each carry the phosphoserine modification. The region spanning 199–364 (ISLYENGVNG…WALLNFLLPD (166 aa)) is the Helicase ATP-binding domain. Residue 212–219 (DEMGLGKT) participates in ATP binding. Positions 315-318 (DEAH) match the DEAH box motif. The region spanning 494–645 (ALDKLLARIK…SIVIQQGRLI (152 aa)) is the Helicase C-terminal domain. Residues K654, K720, and K742 each participate in a glycyl lysine isopeptide (Lys-Gly) (interchain with G-Cter in SUMO2) cross-link. A disordered region spans residues 819–840 (AQREEQKKIDGAEPLTPQETEE). The segment covering 820-829 (QREEQKKIDG) has biased composition (basic and acidic residues). Positions 847–899 (QGFTNWTKRDFNQFIKANEKYGRDDIDNIAREVEGKSPEEVMEYSAVFWERCN) constitute an SANT 1 domain. The residue at position 946 (Y946) is a Phosphotyrosine. The SANT 2 domain maps to 950-1014 (KGKNYTEEED…QRRCNTLISL (65 aa)). Residues 1003–1037 (EFQRRCNTLISLIEKENMEIEERERAEKKKRATKT) are a coiled coil. Positions 1025-1046 (RERAEKKKRATKTPMVKFSAFS) are disordered.

This sequence belongs to the SNF2/RAD54 helicase family. ISWI subfamily. In terms of assembly, may form homodimers. Component of the ACF-1 ISWI chromatin remodeling complex at least composed of SMARCA1 and BAZ1A, which regulates the spacing of histone octamers on the DNA template to facilitate access to DNA. Within the complex interacts with BAZ1A; the interaction is direct. Component of the WICH-1 ISWI chromatin remodeling complex at least composed of SMARCA1 and BAZ1B/WSTF. Within the complex interacts with BAZ1B/WSTF. Component of the NoRC-1 ISWI chromatin remodeling complex at least composed of SMARCA1 and BAZ2A/TIP5. Within the complex interacts with BAZ2A/TIP5. Component of the BRF-1 ISWI chromatin remodeling complex at least composed of SMARCA1 and BAZ2B. Within the complex interacts with BAZ2B. Component of the NURF-1 ISWI chromatin remodeling complex (also called the nucleosome-remodeling factor (NURF) complex) at least composed of SMARCA1, BPTF, RBBP4 and RBBP7. Within the complex interacts with BPTF. Within the complex interacts with RBBP4 and RBBP7. Component of the CERF-1 ISWI chromatin remodeling complex (also called the CECR2-containing-remodeling factor (CERF) complex) at least composed of CECR2 and SMARCA1. LUZP1 is detected as part of the CERF-1 complex in embryonic stem cells where it is involved in complex stabilization but is not detected in the complex in the testis. Component of the RSF-1 ISWI chromatin remodeling complex at least composed of SMARCA1 and RSF1. Within the complex interacts with RSF1. Interacts with PRLR. Interacts with ERCC6. As to expression, predominantly expressed in cortex, cerebellum, ovaries, testes, uterus and placenta.

The protein resides in the nucleus. The catalysed reaction is ATP + H2O = ADP + phosphate + H(+). In terms of biological role, ATPase that possesses intrinsic ATP-dependent chromatin-remodeling activity. ATPase activity is substrate-dependent, and is increased when nucleosomes are the substrate, but is also catalytically active when DNA alone is the substrate. Catalytic subunit of ISWI chromatin-remodeling complexes, which form ordered nucleosome arrays on chromatin and facilitate access to DNA during DNA-templated processes such as DNA replication, transcription, and repair. Within the ISWI chromatin-remodeling complexes, slides edge- and center-positioned histone octamers away from their original location on the DNA template. Catalytic activity and histone octamer sliding propensity is regulated and determined by components of the ISWI chromatin-remodeling complexes. The BAZ1A-, BAZ1B-, BAZ2A- and BAZ2B-containing ISWI chromatin-remodeling complexes regulate the spacing of nucleosomes along the chromatin and have the ability to slide mononucleosomes to the center of a DNA template. The CECR2- and RSF1-containing ISWI chromatin-remodeling complexes do not have the ability to slide mononucleosomes to the center of a DNA template. Within the NURF-1 and CERF-1 ISWI chromatin remodeling complexes, nucleosomes are the preferred substrate for its ATPase activity. Within the NURF-1 ISWI chromatin-remodeling complex, binds to the promoters of En1 and En2 to positively regulate their expression and promote brain development. May promote neurite outgrowth. May be involved in the development of luteal cells. Facilitates nucleosome assembly during DNA replication, ensuring replication fork progression and genomic stability by preventing replication stress and nascent DNA gaps. The chain is SWI/SNF-related matrix-associated actin-dependent regulator of chromatin subfamily A member 1 (Smarca1) from Mus musculus (Mouse).